A 213-amino-acid chain; its full sequence is Imidazole glycerol phosphate synthase subunit HisH (213 aa).

The Glutamine amidotransferase type-1 domain maps to Met-1 to Ala-212. The active-site Nucleophile is Cys-79. Catalysis depends on residues His-187 and Glu-189.

As to quaternary structure, heterodimer of HisH and HisF.

The protein localises to the cytoplasm. It catalyses the reaction 5-[(5-phospho-1-deoxy-D-ribulos-1-ylimino)methylamino]-1-(5-phospho-beta-D-ribosyl)imidazole-4-carboxamide + L-glutamine = D-erythro-1-(imidazol-4-yl)glycerol 3-phosphate + 5-amino-1-(5-phospho-beta-D-ribosyl)imidazole-4-carboxamide + L-glutamate + H(+). The catalysed reaction is L-glutamine + H2O = L-glutamate + NH4(+). It functions in the pathway amino-acid biosynthesis; L-histidine biosynthesis; L-histidine from 5-phospho-alpha-D-ribose 1-diphosphate: step 5/9. In terms of biological role, IGPS catalyzes the conversion of PRFAR and glutamine to IGP, AICAR and glutamate. The HisH subunit catalyzes the hydrolysis of glutamine to glutamate and ammonia as part of the synthesis of IGP and AICAR. The resulting ammonia molecule is channeled to the active site of HisF. The sequence is that of Imidazole glycerol phosphate synthase subunit HisH from Nitratidesulfovibrio vulgaris (strain DP4) (Desulfovibrio vulgaris).